The sequence spans 323 residues: Peridinin-chlorophyll a-binding protein 3 (323 aa).

Repeat copies occupy residues 1–173 (DGIA…RYVP) and 174–323 (DGPV…SAVV).

As to quaternary structure, homotrimer.

It localises to the plastid. The protein resides in the chloroplast. In terms of biological role, water-soluble antenna for capture of solar energy in the blue-green range. Peridinin is an asymmetric carotenoid. This is Peridinin-chlorophyll a-binding protein 3 from Amphidinium carterae (Dinoflagellate).